The sequence spans 197 residues: Pinin homolog 1 (197 aa).

The segment at 30 to 73 is disordered; it reads LDGKVNNEDSHMEIDQPEGSMEEDDHRQVKEKNTSENSVEQKRG. 2 stretches are compositionally biased toward basic and acidic residues: residues 34–43 and 53–71; these read VNNEDSHMEI and DDHR…VEQK.

The protein belongs to the pinin family.

The protein localises to the nucleus. The protein resides in the cytoplasm. In terms of biological role, transcriptional activator that may participate in the regulation of mRNA splicing. This chain is Pinin homolog 1 (pnn1), found in Schizosaccharomyces pombe (strain 972 / ATCC 24843) (Fission yeast).